The primary structure comprises 158 residues: NAD(P)H-quinone oxidoreductase subunit J, chloroplastic (158 aa).

It belongs to the complex I 30 kDa subunit family. As to quaternary structure, NDH is composed of at least 16 different subunits, 5 of which are encoded in the nucleus.

It localises to the plastid. The protein resides in the chloroplast thylakoid membrane. It carries out the reaction a plastoquinone + NADH + (n+1) H(+)(in) = a plastoquinol + NAD(+) + n H(+)(out). It catalyses the reaction a plastoquinone + NADPH + (n+1) H(+)(in) = a plastoquinol + NADP(+) + n H(+)(out). In terms of biological role, NDH shuttles electrons from NAD(P)H:plastoquinone, via FMN and iron-sulfur (Fe-S) centers, to quinones in the photosynthetic chain and possibly in a chloroplast respiratory chain. The immediate electron acceptor for the enzyme in this species is believed to be plastoquinone. Couples the redox reaction to proton translocation, and thus conserves the redox energy in a proton gradient. This Cicer arietinum (Chickpea) protein is NAD(P)H-quinone oxidoreductase subunit J, chloroplastic.